Reading from the N-terminus, the 121-residue chain is Putative membrane protein insertion efficiency factor (121 aa).

Belongs to the UPF0161 family.

It is found in the cell membrane. Functionally, could be involved in insertion of integral membrane proteins into the membrane. This chain is Putative membrane protein insertion efficiency factor, found in Rhodococcus opacus (strain B4).